A 267-amino-acid chain; its full sequence is Orotidine 5'-phosphate decarboxylase (267 aa).

Substrate-binding positions include aspartate 37, 59–61 (KTH), 91–100 (DRKFADIGNT), tyrosine 217, and arginine 235. The active-site Proton donor is lysine 93.

Belongs to the OMP decarboxylase family.

The catalysed reaction is orotidine 5'-phosphate + H(+) = UMP + CO2. It participates in pyrimidine metabolism; UMP biosynthesis via de novo pathway; UMP from orotate: step 2/2. The chain is Orotidine 5'-phosphate decarboxylase (URA3) from Eremothecium gossypii (strain ATCC 10895 / CBS 109.51 / FGSC 9923 / NRRL Y-1056) (Yeast).